The following is a 182-amino-acid chain: Putative manganese efflux pump MntP (182 aa).

Transmembrane regions (helical) follow at residues 3–23 (ILLL…SNGA), 42–62 (FFQG…VGFI), 65–85 (IDHF…IFDS), 126–146 (IWFS…AATF), and 161–181 (ILGG…HLGI).

This sequence belongs to the MntP (TC 9.B.29) family.

It localises to the cell inner membrane. Its function is as follows. Probably functions as a manganese efflux pump. The polypeptide is Putative manganese efflux pump MntP (Campylobacter hominis (strain ATCC BAA-381 / DSM 21671 / CCUG 45161 / LMG 19568 / NCTC 13146 / CH001A)).